A 191-amino-acid polypeptide reads, in one-letter code: dTTP/UTP pyrophosphatase (191 aa).

Catalysis depends on Asp-68, which acts as the Proton acceptor.

Belongs to the Maf family. YhdE subfamily. A divalent metal cation serves as cofactor.

Its subcellular location is the cytoplasm. It carries out the reaction dTTP + H2O = dTMP + diphosphate + H(+). The catalysed reaction is UTP + H2O = UMP + diphosphate + H(+). In terms of biological role, nucleoside triphosphate pyrophosphatase that hydrolyzes dTTP and UTP. May have a dual role in cell division arrest and in preventing the incorporation of modified nucleotides into cellular nucleic acids. This Thermoanaerobacter pseudethanolicus (strain ATCC 33223 / 39E) (Clostridium thermohydrosulfuricum) protein is dTTP/UTP pyrophosphatase.